The chain runs to 352 residues: Ribosomal RNA large subunit methyltransferase M (352 aa).

S-adenosyl-L-methionine is bound by residues serine 184, 217–220 (APGG), aspartate 236, aspartate 256, and aspartate 272. Catalysis depends on lysine 301, which acts as the Proton acceptor.

This sequence belongs to the class I-like SAM-binding methyltransferase superfamily. RNA methyltransferase RlmE family. RlmM subfamily. Monomer.

The protein localises to the cytoplasm. The enzyme catalyses cytidine(2498) in 23S rRNA + S-adenosyl-L-methionine = 2'-O-methylcytidine(2498) in 23S rRNA + S-adenosyl-L-homocysteine + H(+). Functionally, catalyzes the 2'-O-methylation at nucleotide C2498 in 23S rRNA. This chain is Ribosomal RNA large subunit methyltransferase M, found in Pseudomonas aeruginosa (strain UCBPP-PA14).